The following is a 352-amino-acid chain: Selenide, water dikinase (352 aa).

The active site involves C23. ATP is bound by residues K26 and S54 to D56. D57 contacts Mg(2+). ATP-binding positions include D74, D97, and G145 to S147. Position 97 (D97) interacts with Mg(2+). D233 contacts Mg(2+).

Belongs to the selenophosphate synthase 1 family. Class I subfamily. In terms of assembly, homodimer. Mg(2+) is required as a cofactor.

It carries out the reaction hydrogenselenide + ATP + H2O = selenophosphate + AMP + phosphate + 2 H(+). Synthesizes selenophosphate from selenide and ATP. The polypeptide is Selenide, water dikinase (Shewanella putrefaciens (strain CN-32 / ATCC BAA-453)).